Reading from the N-terminus, the 62-residue chain is Prokaryotic ubiquitin-like protein Pup (62 aa).

The interval 1-36 (MEKSSQIHGSKPGDDNADEPENAAGQSQIRKQGADD) is disordered. Positions 18–56 (DEPENAAGQSQIRKQGADDLLDEIDGLLESNAEEFVRSY) are ARC ATPase binding. Gln-62 bears the Deamidated glutamine mark. Residue Gln-62 forms an Isoglutamyl lysine isopeptide (Gln-Lys) (interchain with K-? in acceptor proteins) linkage.

This sequence belongs to the prokaryotic ubiquitin-like protein family. As to quaternary structure, strongly interacts with the proteasome-associated ATPase ARC through a hydrophobic interface; the interacting region of Pup lies in its C-terminal half. There is one Pup binding site per ARC hexamer ring. Is modified by deamidation of its C-terminal glutamine to glutamate by the deamidase Dop, a prerequisite to the subsequent pupylation process.

Its pathway is protein degradation; proteasomal Pup-dependent pathway. In terms of biological role, protein modifier that is covalently attached to lysine residues of substrate proteins, thereby targeting them for proteasomal degradation. The tagging system is termed pupylation. The protein is Prokaryotic ubiquitin-like protein Pup of Corynebacterium kroppenstedtii (strain DSM 44385 / JCM 11950 / CIP 105744 / CCUG 35717).